The primary structure comprises 737 residues: Polyribonucleotide nucleotidyltransferase (737 aa).

D489 and D495 together coordinate Mg(2+). The KH domain maps to 556-615 (PKIDTIKIDVDKIKIVIGKGGETIDKIIAETGVKIDIDEEGNVSIYSSDQDAINRAKEII). Residues 625-693 (DEVYRAKVVR…EKGRIDASMK (69 aa)) form the S1 motif domain. Residues 691–737 (SMKALLPRPPKPEHDEKGEKSERPHRPRHHKDHKPKKEFTETPKDSE) are disordered. Residues 700–714 (PKPEHDEKGEKSERP) show a composition bias toward basic and acidic residues. Basic residues predominate over residues 715 to 724 (HRPRHHKDHK). The span at 725–737 (PKKEFTETPKDSE) shows a compositional bias: basic and acidic residues.

It belongs to the polyribonucleotide nucleotidyltransferase family. Mg(2+) serves as cofactor.

The protein localises to the cytoplasm. The enzyme catalyses RNA(n+1) + phosphate = RNA(n) + a ribonucleoside 5'-diphosphate. In terms of biological role, involved in mRNA degradation. Catalyzes the phosphorolysis of single-stranded polyribonucleotides processively in the 3'- to 5'-direction. The sequence is that of Polyribonucleotide nucleotidyltransferase from Streptococcus pneumoniae (strain ATCC 700669 / Spain 23F-1).